A 91-amino-acid polypeptide reads, in one-letter code: Anthranilate synthase component 2 (91 aa).

One can recognise a Glutamine amidotransferase type-1 domain in the interval 4-91 (NILIIDNYDS…CLGHQAIGEA (88 aa)). 55 to 57 (GPG) is a binding site for L-glutamine. Cys-82 serves as the catalytic Nucleophile; for GATase activity. Gln-86 contributes to the L-glutamine binding site.

In terms of assembly, heterotetramer consisting of two non-identical subunits: a beta subunit (TrpG) and a large alpha subunit (TrpE).

The catalysed reaction is chorismate + L-glutamine = anthranilate + pyruvate + L-glutamate + H(+). The protein operates within amino-acid biosynthesis; L-tryptophan biosynthesis; L-tryptophan from chorismate: step 1/5. Part of a heterotetrameric complex that catalyzes the two-step biosynthesis of anthranilate, an intermediate in the biosynthesis of L-tryptophan. In the first step, the glutamine-binding beta subunit (TrpG) of anthranilate synthase (AS) provides the glutamine amidotransferase activity which generates ammonia as a substrate that, along with chorismate, is used in the second step, catalyzed by the large alpha subunit of AS (TrpE) to produce anthranilate. In the absence of TrpG, TrpE can synthesize anthranilate directly from chorismate and high concentrations of ammonia. This is Anthranilate synthase component 2 (trpG) from Acetivibrio thermocellus (Hungateiclostridium thermocellum).